The sequence spans 400 residues: Endoglucanase 5A (400 aa).

The first 26 residues, 1–26 (MKKITTIFVVLLMTVALFSIGNTTAA), serve as a signal peptide directing secretion. Substrate contacts are provided by residues H61, 65–66 (WY), Y92, and H127. E165 acts as the Proton donor in catalysis. Y228 lines the substrate pocket. E254 acts as the Nucleophile in catalysis. Residues 260 to 261 (AT), W288, and 293 to 295 (KDE) contribute to the substrate site. Positions 328–363 (ESASIPPSDPTPPSDPGEPDPTPPSDPGEYPAWDPN) are disordered. Residues 334–353 (PSDPTPPSDPGEPDPTPPSD) are compositionally biased toward pro residues. Positions 357-396 (YPAWDPNQIYTNEIVYHNGQLWQAKWWTQNQEPGDPYGPW) constitute a Chitin-binding type-3 domain.

The protein belongs to the glycosyl hydrolase 5 (cellulase A) family. Monomer.

It is found in the secreted. It catalyses the reaction Endohydrolysis of (1-&gt;4)-beta-D-glucosidic linkages in cellulose, lichenin and cereal beta-D-glucans.. The polypeptide is Endoglucanase 5A (cel5A) (Salipaludibacillus agaradhaerens (Bacillus agaradhaerens)).